The chain runs to 199 residues: B3 domain-containing protein Os06g0107800 (199 aa).

Residues Gln-13 to Arg-32 form a disordered region. The span at Gln-15–Gly-29 shows a compositional bias: gly residues. The segment at residues Phe-37 to Ala-141 is a DNA-binding region (TF-B3).

It is found in the nucleus. In Oryza sativa subsp. japonica (Rice), this protein is B3 domain-containing protein Os06g0107800.